We begin with the raw amino-acid sequence, 285 residues long: (3S)-malyl-CoA thioesterase (285 aa).

Substrate is bound by residues arginine 70 and glutamate 122. Residues glutamate 122 and aspartate 148 each coordinate Mg(2+).

The protein belongs to the HpcH/HpaI aldolase family. In terms of assembly, homodimer or homotrimer. The cofactor is Mg(2+).

It carries out the reaction (S)-malyl-CoA + H2O = (S)-malate + CoA + H(+). Catalyzes the hydrolysis of (3S)-malyl-CoA to (3S)-malate and free CoA. Inactive towards beta-methylmalyl-CoA and other CoA esters. The polypeptide is (3S)-malyl-CoA thioesterase (Cereibacter sphaeroides (strain ATCC 17029 / ATH 2.4.9) (Rhodobacter sphaeroides)).